We begin with the raw amino-acid sequence, 112 residues long: SPbeta prophage-derived uncharacterized protein YoqB (112 aa).

The sequence is that of SPbeta prophage-derived uncharacterized protein YoqB (yoqB) from Bacillus subtilis (strain 168).